The following is a 219-amino-acid chain: Type-5 uracil-DNA glycosylase (219 aa).

Positions 13, 16, 115, and 130 each coordinate [4Fe-4S] cluster.

It belongs to the uracil-DNA glycosylase (UDG) superfamily. Type 5 (UDGb) family.

DNA glycosylase with broad substrate specificity. Can remove uracil from double-stranded DNA containing either a U/G, U/A, U/C or U/T base pair. Can also excise hypoxanthine from double-stranded DNA containing G/I, T/I, and A/I base pairs, xanthine from both double-stranded and single stranded DNA, thymine from G/T mismatched DNA, 5'-hydroxymethyluracil and 5'-fluorouracil. The protein is Type-5 uracil-DNA glycosylase of Thermus thermophilus (strain ATCC 27634 / DSM 579 / HB8).